Here is a 314-residue protein sequence, read N- to C-terminus: DNA-directed RNA polymerase subunit alpha (314 aa).

The interval 1–228 is alpha N-terminal domain (alpha-NTD); sequence MIEIEKPRIE…EHLNIFVGLT (228 aa). The alpha C-terminal domain (alpha-CTD) stretch occupies residues 245–314; the sequence is KEKVLEMSIE…DLGLGLRKED (70 aa).

The protein belongs to the RNA polymerase alpha chain family. Homodimer. The RNAP catalytic core consists of 2 alpha, 1 beta, 1 beta' and 1 omega subunit. When a sigma factor is associated with the core the holoenzyme is formed, which can initiate transcription.

The catalysed reaction is RNA(n) + a ribonucleoside 5'-triphosphate = RNA(n+1) + diphosphate. Functionally, DNA-dependent RNA polymerase catalyzes the transcription of DNA into RNA using the four ribonucleoside triphosphates as substrates. In Staphylococcus aureus (strain bovine RF122 / ET3-1), this protein is DNA-directed RNA polymerase subunit alpha.